Here is a 249-residue protein sequence, read N- to C-terminus: Cytochrome c oxidase subunit 2 (249 aa).

The next 2 membrane-spanning stretches (helical) occupy residues 40–60 and 81–101; these read NIMF…YTIT and IIWT…SFIL. Cu cation is bound by residues His-184, Cys-219, Glu-221, Cys-223, His-227, and Met-230. Residue Glu-221 participates in Mg(2+) binding.

This sequence belongs to the cytochrome c oxidase subunit 2 family. Component of the cytochrome c oxidase (complex IV, CIV), a multisubunit enzyme composed of a catalytic core of 3 subunits and several supernumerary subunits. The complex exists as a monomer or a dimer and forms supercomplexes (SCs) in the inner mitochondrial membrane with ubiquinol-cytochrome c oxidoreductase (cytochrome b-c1 complex, complex III, CIII). Cu cation is required as a cofactor.

Its subcellular location is the mitochondrion inner membrane. The catalysed reaction is 4 Fe(II)-[cytochrome c] + O2 + 8 H(+)(in) = 4 Fe(III)-[cytochrome c] + 2 H2O + 4 H(+)(out). Functionally, component of the cytochrome c oxidase, the last enzyme in the mitochondrial electron transport chain which drives oxidative phosphorylation. The respiratory chain contains 3 multisubunit complexes succinate dehydrogenase (complex II, CII), ubiquinol-cytochrome c oxidoreductase (cytochrome b-c1 complex, complex III, CIII) and cytochrome c oxidase (complex IV, CIV), that cooperate to transfer electrons derived from NADH and succinate to molecular oxygen, creating an electrochemical gradient over the inner membrane that drives transmembrane transport and the ATP synthase. Cytochrome c oxidase is the component of the respiratory chain that catalyzes the reduction of oxygen to water. Electrons originating from reduced cytochrome c in the intermembrane space (IMS) are transferred via the dinuclear copper A center (CU(A)) of subunit 2 and heme A of subunit 1 to the active site in subunit 1, a binuclear center (BNC) formed by heme A3 and copper B (CU(B)). The BNC reduces molecular oxygen to 2 water molecules using 4 electrons from cytochrome c in the IMS and 4 protons from the mitochondrial matrix. This chain is Cytochrome c oxidase subunit 2 (COX2), found in Vanderwaltozyma polyspora (strain ATCC 22028 / DSM 70294 / BCRC 21397 / CBS 2163 / NBRC 10782 / NRRL Y-8283 / UCD 57-17) (Kluyveromyces polysporus).